A 362-amino-acid chain; its full sequence is Innexin-17 (362 aa).

The next 4 membrane-spanning stretches (helical) occupy residues 27-47, 101-121, 189-209, and 266-286; these read YFTV…QYVG, WVPF…VIWN, FLAT…MGLG, and LFIA…FDIF.

It belongs to the pannexin family.

Its subcellular location is the cell membrane. The protein localises to the cell junction. It localises to the gap junction. In terms of biological role, structural component of the gap junctions. This chain is Innexin-17, found in Caenorhabditis elegans.